Here is an 800-residue protein sequence, read N- to C-terminus: Phenylalanine--tRNA ligase beta subunit (800 aa).

The tRNA-binding domain occupies 38 to 147 (GAELKGVVAA…PGTVPGTPIG (110 aa)). The B5 domain maps to 401–477 (VASPEVRMRW…RTLGYDAIPE (77 aa)). Mg(2+)-binding residues include Asp455, Asp461, Glu464, and Glu465. The region spanning 708-799 (PRLPAVLRDV…LRERVGAELR (92 aa)) is the FDX-ACB domain.

The protein belongs to the phenylalanyl-tRNA synthetase beta subunit family. Type 1 subfamily. Tetramer of two alpha and two beta subunits. Mg(2+) serves as cofactor.

The protein localises to the cytoplasm. The enzyme catalyses tRNA(Phe) + L-phenylalanine + ATP = L-phenylalanyl-tRNA(Phe) + AMP + diphosphate + H(+). This is Phenylalanine--tRNA ligase beta subunit from Anaeromyxobacter dehalogenans (strain 2CP-C).